The primary structure comprises 88 residues: Small ribosomal subunit protein uS17 (88 aa).

The protein belongs to the universal ribosomal protein uS17 family. As to quaternary structure, part of the 30S ribosomal subunit.

Its function is as follows. One of the primary rRNA binding proteins, it binds specifically to the 5'-end of 16S ribosomal RNA. The sequence is that of Small ribosomal subunit protein uS17 from Methylorubrum extorquens (strain PA1) (Methylobacterium extorquens).